The chain runs to 136 residues: Large ribosomal subunit protein bL20 (136 aa).

Belongs to the bacterial ribosomal protein bL20 family.

Functionally, binds directly to 23S ribosomal RNA and is necessary for the in vitro assembly process of the 50S ribosomal subunit. It is not involved in the protein synthesizing functions of that subunit. In Tropheryma whipplei (strain TW08/27) (Whipple's bacillus), this protein is Large ribosomal subunit protein bL20.